Here is a 156-residue protein sequence, read N- to C-terminus: Small ribosomal subunit protein uS7 (156 aa).

Belongs to the universal ribosomal protein uS7 family. In terms of assembly, part of the 30S ribosomal subunit. Contacts proteins S9 and S11.

Functionally, one of the primary rRNA binding proteins, it binds directly to 16S rRNA where it nucleates assembly of the head domain of the 30S subunit. Is located at the subunit interface close to the decoding center, probably blocks exit of the E-site tRNA. This chain is Small ribosomal subunit protein uS7, found in Aliivibrio fischeri (strain MJ11) (Vibrio fischeri).